The chain runs to 390 residues: Transforming growth factor beta-1 proprotein (390 aa).

A signal peptide spans 1-29 (MPPSGLRLLPLLLPLPWLLVLTPGRPAAG). Residues 30-74 (LSTCKTIDMELVKRKRIEAIRGQILSKLRLASPPSQGEVPPGPLP) form a straightjacket domain region. The arm domain stretch occupies residues 75–271 (EAVLALYNST…ATPLERAQHL (197 aa)). 3 N-linked (GlcNAc...) asparagine glycosylation sites follow: N82, N136, and N176. The bowtie tail stretch occupies residues 226 to 252 (DSKDNKLHVEINGISPKRRGDLGTIHD). A Cell attachment site motif is present at residues 244–246 (RGD). Cystine bridges form between C285/C294, C293/C356, C322/C387, and C326/C389.

The protein belongs to the TGF-beta family. Homodimer; disulfide-linked. Interacts with the serine proteases, HTRA1 and HTRA3: the interaction with either inhibits TGFB1-mediated signaling and the HTRA protease activity is required for this inhibition. May interact with THSD4; this interaction may lead to sequestration by FBN1 microfibril assembly and attenuation of TGFB signaling. Interacts with CD109, DPT and ASPN. Interacts with EFEMP2. Interacts with TSKU; the interaction contributes to regulation of the hair cycle. Interacts with TGFBR3. As to quaternary structure, homodimer; disulfide-linked. Interacts with transforming growth factor beta-1 (TGF-beta-1) chain; interaction is non-covalent and maintains TGF-beta-1 in a latent state; each latency-associated peptide (LAP) monomer interacts with TGF-beta-1 in the other monomer. Interacts with LTBP1; leading to regulation of TGF-beta-1 activation. Interacts with LRRC32/GARP; leading to regulation of TGF-beta-1 activation on the surface of activated regulatory T-cells (Tregs). Interacts with LRRC33/NRROS; leading to regulation of TGF-beta-1 activation in macrophages and microglia. Interacts (via cell attachment site) with integrins ITGAV and ITGB6 (ITGAV:ITGB6), leading to release of the active TGF-beta-1. Interacts with NREP; the interaction results in a decrease in TGFB1 autoinduction. Interacts with HSP90AB1; inhibits latent TGFB1 activation. In terms of assembly, homodimer; disulfide-linked. Interacts with TGF-beta receptors (TGFBR1 and TGFBR2), leading to signal transduction. Post-translationally, transforming growth factor beta-1 proprotein: The precursor proprotein is cleaved in the Golgi apparatus by FURIN to form Transforming growth factor beta-1 (TGF-beta-1) and Latency-associated peptide (LAP) chains, which remain non-covalently linked, rendering TGF-beta-1 inactive. In terms of processing, N-glycosylated. Deglycosylation leads to activation of Transforming growth factor beta-1 (TGF-beta-1); mechanisms triggering deglycosylation-driven activation of TGF-beta-1 are however unclear. Expressed in cardiomyocytes. Weakly expressed in the mammary glands, with a slight increase of expression following onset of involution.

It localises to the secreted. It is found in the extracellular space. The protein resides in the extracellular matrix. Functionally, transforming growth factor beta-1 proprotein: Precursor of the Latency-associated peptide (LAP) and Transforming growth factor beta-1 (TGF-beta-1) chains, which constitute the regulatory and active subunit of TGF-beta-1, respectively. Required to maintain the Transforming growth factor beta-1 (TGF-beta-1) chain in a latent state during storage in extracellular matrix. Associates non-covalently with TGF-beta-1 and regulates its activation via interaction with 'milieu molecules', such as LTBP1, LRRC32/GARP and LRRC33/NRROS, that control activation of TGF-beta-1. Interaction with LRRC33/NRROS regulates activation of TGF-beta-1 in macrophages and microglia. Interaction with LRRC32/GARP controls activation of TGF-beta-1 on the surface of activated regulatory T-cells (Tregs). Interaction with integrins (ITGAV:ITGB6 or ITGAV:ITGB8) results in distortion of the Latency-associated peptide chain and subsequent release of the active TGF-beta-1. In terms of biological role, multifunctional protein that regulates the growth and differentiation of various cell types and is involved in various processes, such as normal development, immune function, microglia function and responses to neurodegeneration. Activation into mature form follows different steps: following cleavage of the proprotein in the Golgi apparatus, Latency-associated peptide (LAP) and Transforming growth factor beta-1 (TGF-beta-1) chains remain non-covalently linked rendering TGF-beta-1 inactive during storage in extracellular matrix. At the same time, LAP chain interacts with 'milieu molecules', such as LTBP1, LRRC32/GARP and LRRC33/NRROS that control activation of TGF-beta-1 and maintain it in a latent state during storage in extracellular milieus. TGF-beta-1 is released from LAP by integrins (ITGAV:ITGB6 or ITGAV:ITGB8): integrin-binding to LAP stabilizes an alternative conformation of the LAP bowtie tail and results in distortion of the LAP chain and subsequent release of the active TGF-beta-1. Once activated following release of LAP, TGF-beta-1 acts by binding to TGF-beta receptors (TGFBR1 and TGFBR2), which transduce signal. While expressed by many cells types, TGF-beta-1 only has a very localized range of action within cell environment thanks to fine regulation of its activation by Latency-associated peptide chain (LAP) and 'milieu molecules'. Plays an important role in bone remodeling: acts as a potent stimulator of osteoblastic bone formation, causing chemotaxis, proliferation and differentiation in committed osteoblasts. Can promote either T-helper 17 cells (Th17) or regulatory T-cells (Treg) lineage differentiation in a concentration-dependent manner. At high concentrations, leads to FOXP3-mediated suppression of RORC and down-regulation of IL-17 expression, favoring Treg cell development. At low concentrations in concert with IL-6 and IL-21, leads to expression of the IL-17 and IL-23 receptors, favoring differentiation to Th17 cells. Stimulates sustained production of collagen through the activation of CREB3L1 by regulated intramembrane proteolysis (RIP). Mediates SMAD2/3 activation by inducing its phosphorylation and subsequent translocation to the nucleus. Positively regulates odontoblastic differentiation in dental papilla cells, via promotion of IPO7-mediated translocation of phosphorylated SMAD2 to the nucleus and subsequent transcription of target genes. Can induce epithelial-to-mesenchymal transition (EMT) and cell migration in various cell types. This chain is Transforming growth factor beta-1 proprotein, found in Mus musculus (Mouse).